Here is a 195-residue protein sequence, read N- to C-terminus: Adenylate kinase (195 aa).

An ATP-binding site is contributed by G8–T16.

The protein belongs to the archaeal adenylate kinase family. As to quaternary structure, homotrimer.

It is found in the cytoplasm. It carries out the reaction AMP + ATP = 2 ADP. The chain is Adenylate kinase (adkA) from Saccharolobus solfataricus (strain ATCC 35092 / DSM 1617 / JCM 11322 / P2) (Sulfolobus solfataricus).